Consider the following 238-residue polypeptide: Probable transcriptional regulatory protein CPn_0573/CP_0176/CPj0573/CpB0595 (238 aa).

A disordered region spans residues 1 to 20 (MAGHSKWANTKHRKERADHK). Over residues 9–20 (NTKHRKERADHK) the composition is skewed to basic residues.

Belongs to the TACO1 family.

It is found in the cytoplasm. This is Probable transcriptional regulatory protein CPn_0573/CP_0176/CPj0573/CpB0595 from Chlamydia pneumoniae (Chlamydophila pneumoniae).